The chain runs to 403 residues: MTSYSYRQSSAMSSYGGMGGGPVRFGSGGVFRAPSIHGGSGGRGVSVSSTRIVSSSSGGYVGGRGGSFSGALTVTDGLLGGNEKITMQNLNDRLASYLDKVRALEQANGELEVKIRDWYQKQGPGPFRDYSQYFKTIEDLRDKILGATIENSKIVLQIDNARLAADDFRTKFETEQALRMSVEADINGLRRVLDELTLARTDLEMQIENLKEELAYLKKNHEEEISALRSQVGGQVSVEVDSTPGIDLAKILSEMRSQYEAMAEKNRKDAEAWYLTQIDELNTQVAVHTTQIQINKTEVTELRRKVQDLEIELQSQLSMKAALEGTVAEIEARYGAQLSHIQGVISSIEVQLSNVRADTERQNQEYQQLMDIKSRLEQEIATYRSLLEGQEAHYNSLSIAKAL.

The tract at residues 1–82 (MTSYSYRQSS…TVTDGLLGGN (82 aa)) is head. Omega-N-methylarginine is present on R7. Position 14 is a phosphoserine (S14). Asymmetric dimethylarginine; alternate is present on R24. R24 is subject to Omega-N-methylarginine; alternate. The residue at position 27 (S27) is a Phosphoserine. Omega-N-methylarginine is present on R32. Phosphoserine is present on residues S35 and S40. An omega-N-methylarginine mark is found at R43 and R51. Residues S57 and S67 each carry the phosphoserine modification. Residues 83-118 (EKITMQNLNDRLASYLDKVRALEQANGELEVKIRDW) are coil 1A. An IF rod domain is found at 83 to 394 (EKITMQNLND…SLLEGQEAHY (312 aa)). The linker 1 stretch occupies residues 119–136 (YQKQGPGPFRDYSQYFKT). The segment at 137 to 228 (IEDLRDKILG…KNHEEEISAL (92 aa)) is coil 1B. The tract at residues 229-251 (RSQVGGQVSVEVDSTPGIDLAKI) is linker 12. Positions 247 to 393 (DLAKILSEMR…RSLLEGQEAH (147 aa)) are necessary for interaction with PNN. The coil 2 stretch occupies residues 252–390 (LSEMRSQYEA…ATYRSLLEGQ (139 aa)). T326 bears the Phosphothreonine mark. A rod-like helical tail region spans residues 391–403 (EAHYNSLSIAKAL). Y394 bears the Phosphotyrosine mark. S398 bears the Phosphoserine mark.

It belongs to the intermediate filament family. Heterotetramer of two type I and two type II keratins. Interacts with PNN. Interacts with the actin-binding domain of DMD. As to expression, expressed in brain, heart, skin and in costameres of myoplasm at the sarcolemmal membrane in skeletal and cardiac muscle fibers. Undifferentiated gonads and somatic cells of ovarian cords throughout the fetal ovary development.

Functionally, involved in the organization of myofibers. Together with KRT8, helps to link the contractile apparatus to dystrophin at the costameres of striated muscle. The protein is Keratin, type I cytoskeletal 19 (Krt19) of Rattus norvegicus (Rat).